Here is a 299-residue protein sequence, read N- to C-terminus: Non-structural protein V (299 aa).

A disordered region spans residues 40-98 (SDNPGQEQATCKEEEAGASGLSKPCLSAIGSTEGGAPRIRGQGSGESDDDTETLGFPSR). Positions 110-120 (YYVYDHSGEAV) are interaction with host STAT1. The span at 134–145 (GLDGDSTLSGGD) shows a compositional bias: low complexity. 2 disordered regions span residues 134-174 (GLDG…APIS) and 204-230 (PKLG…PIKK). A compositionally biased stretch (acidic residues) spans 146 to 160 (NESENSDVDIGEPDT). Positions 232, 251, 255, 267, 269, 272, 276, and 279 each coordinate Zn(2+).

Belongs to the paramyxoviruses V protein family. As to quaternary structure, interacts with host IFIH1/MDA5 and DHX58/LGP2; these interactions are involved in the inhibition of the host type I interferon signaling pathway. Interacts with host TYK2; this interaction inhibits the type I interferon signaling pathway without affecting the type II pathway. Interacts with host IRF7; this interaction inhibits IRF7 translocation to the nucleus. Interacts with host CHUK. Interacts with host RELA/p65; this interaction inhibits the nuclear translocation of NF-KappaB. Interacts (via N-terminus) with host STAT1 and JAK1; these interactions inhibit STAT1 phosphorylation by Jak1 and thereby the type I interferon signaling pathway. Interacts (via C-terminus) with host STAT2; this interaction is involved in the inhibition of the host type I interferon signaling pathway. Forms a complex with host PPP1CA and PPP1CC; this interaction prevents dephosphorylation of host IFIH1/MDA5 and leads to the inhibition of the host type I interferon signaling pathway. Interacts with host IRF9; this interaction prevents the binding of IRF9 to STAT2 and thereby the type I interferon signaling pathway. Interacts with host RIGI regulatory protein (via CARDs domain) and host TRIM25 (via SPRY domain); these interactions prevent TRIM25-mediated ubiquitination of RIG-I and disrupts downstream RIG-I signaling.

The protein resides in the host cytoplasm. Its function is as follows. Plays an essential role in the inhibition of host immune response. Prevents the establishment of cellular antiviral state by blocking interferon-alpha/beta (IFN-alpha/beta) production and signaling pathway. Interacts with host IFIH1/MDA5 and DHX58/LGP2 to inhibit the transduction pathway involved in the activation of IFN-beta promoter, thus protecting the virus against cell antiviral state. Blocks the type I interferon signaling pathway by interacting with host TYK2 and thereby inhibiting downstream STAT1 and STAT2 phosphorylation. Blocks the type I interferon signaling pathway by disrupting the RIG-I signaling pathway. Moderately affects the type II interferon signaling. Prevents PP1alpha/gamma-mediated dephosphorylation of host IFIH1/MDA5 and thus blocks its activation. The polypeptide is Non-structural protein V (P/V) (Measles virus (strain IP-3-Ca) (MeV)).